Here is a 406-residue protein sequence, read N- to C-terminus: Putative phosphate permease PH0640 (406 aa).

11 helical membrane-spanning segments follow: residues 2 to 22 (IPID…AWAI), 45 to 65 (AVLI…KTVT), 83 to 103 (VLIY…IIAT), 114 to 134 (SIIG…IVNW), 140 to 160 (VVLS…LVFR), 182 to 202 (FWIG…VLHG), 207 to 227 (IGIL…TSML), 265 to 285 (VANA…GLAG), 288 to 308 (VPVP…GVAT), 330 to 350 (FTID…GMPI), and 385 to 405 (FVTV…LLLI).

It belongs to the inorganic phosphate transporter (PiT) (TC 2.A.20) family.

Its subcellular location is the cell membrane. Its function is as follows. Potential transporter for phosphate. The protein is Putative phosphate permease PH0640 of Pyrococcus horikoshii (strain ATCC 700860 / DSM 12428 / JCM 9974 / NBRC 100139 / OT-3).